We begin with the raw amino-acid sequence, 1875 residues long: Protein MLP1 (1875 aa).

At Ser-2 the chain carries N-acetylserine. Coiled coils occupy residues 69–487 and 531–1678; these read ELKA…IQYL and ERLV…SAES. Position 337 is a phosphothreonine (Thr-337). The residue at position 379 (Ser-379) is a Phosphoserine. The short motif at 1496 to 1565 is the Required for nuclear localization element; it reads QPSNINMEEI…EEKVEERIKS (70 aa). The tract at residues 1641-1689 is disordered; that stretch reads KKSFDEGKQQAMMKTTLLERKLAKMESQLSETKQSAESPPKSVNNVQNP. The segment covering 1667–1688 has biased composition (polar residues); sequence SQLSETKQSAESPPKSVNNVQN. A phosphoserine mark is found at Ser-1670 and Ser-1710. The span at 1716 to 1725 shows a compositional bias: low complexity; that stretch reads KLNSKSSSGG. The segment at 1716–1875 is disordered; sequence KLNSKSSSGG…TDKVNDENSI (160 aa). A compositionally biased stretch (polar residues) spans 1728 to 1737; it reads PFTSPSPNKH. Ser-1733 is subject to Phosphoserine. A compositionally biased stretch (basic and acidic residues) spans 1738-1748; the sequence is LQNDNDKRESL. Residues 1787-1801 are compositionally biased toward polar residues; it reads TSNNPAQKDSSNRNV. Ser-1803 carries the phosphoserine modification. Basic and acidic residues-rich tracts occupy residues 1807-1840 and 1865-1875; these read TEKK…GELK and ETDKVNDENSI. Residues 1834 to 1866 adopt a coiled-coil conformation; it reads DEVGELKNDEDDTTENINESKKIKTEDEEEKET.

In terms of assembly, component of the nuclear pore complex (NPC). NPC constitutes the exclusive means of nucleocytoplasmic transport. NPCs allow the passive diffusion of ions and small molecules and the active, nuclear transport receptor-mediated bidirectional transport of macromolecules such as proteins, RNAs, ribonucleoparticles (RNPs), and ribosomal subunits across the nuclear envelope. Due to its 8-fold rotational symmetry, all subunits are present with 8 copies or multiples thereof. Interacts with NAB2, a hnRNP required for mRNA export. Interacts with MLP2. In terms of processing, may be phosphorylated by CDC28.

It is found in the nucleus. It localises to the nuclear pore complex. Functionally, together with the closely related MLP2, involved in the structural and functional organization of perinuclear chromatin. Together with MLP2, associates with the nuclear pore complex and form filamentous structures along the nuclear periphery. Has a role in the localization of Esc1 to nucleolar regions. Together with MLP2, mediates tethering of the some telomeres to the nuclear periphery, probably mediated by YKU70/YKU80 (HDF1/HDF2) heterodimer and show perinuclear location dependent silencing. MLP1 and MLP2 are involved in telomere length regulation but not silencing or telomere anchoring. Recognizes the 5'-splice site of pre-mRNAs and retains unspliced pre-mRNA in the nucleus without affecting splicing itself. The chain is Protein MLP1 (MLP1) from Saccharomyces cerevisiae (strain ATCC 204508 / S288c) (Baker's yeast).